A 276-amino-acid polypeptide reads, in one-letter code: Diaminopimelate epimerase (276 aa).

Substrate-binding residues include asparagine 13, glutamine 46, and asparagine 66. The active-site Proton donor is cysteine 75. Residues 76-77 (GN), asparagine 159, asparagine 192, and 210-211 (ER) contribute to the substrate site. Cysteine 219 serves as the catalytic Proton acceptor. 220-221 (GT) serves as a coordination point for substrate.

The protein belongs to the diaminopimelate epimerase family. Homodimer.

It localises to the cytoplasm. It catalyses the reaction (2S,6S)-2,6-diaminopimelate = meso-2,6-diaminopimelate. Its pathway is amino-acid biosynthesis; L-lysine biosynthesis via DAP pathway; DL-2,6-diaminopimelate from LL-2,6-diaminopimelate: step 1/1. Its function is as follows. Catalyzes the stereoinversion of LL-2,6-diaminopimelate (L,L-DAP) to meso-diaminopimelate (meso-DAP), a precursor of L-lysine and an essential component of the bacterial peptidoglycan. In Azotobacter vinelandii (strain DJ / ATCC BAA-1303), this protein is Diaminopimelate epimerase.